We begin with the raw amino-acid sequence, 336 residues long: MQKHYTVAWFLYSAPGVDPSPPCRSLGWKRKREWSDESEEEPEKELAPEPEETWVVETLCGLKMKLKQQRVSPILLEHHKDFNSQLAPGVDPSPPHRSFCWKRKMEWWDKSEESEEEPRKVLAPEPEEIWVAEMLCGLKMKLKRRRVSLVLPEHHEAFNRLLEDPVIKRFLAWDKDLRVSDKYLLAMVIAYFSRAGFPSWQYQRLHFFLALYLANDMEEDDEDSKQNIFHFLYGKNRSRIPLLRKRRFQLYRSMNPRARKNRSHIPLVRKRRFQLRRCMNPRARKNRSQIVLFQKRRFHFFCSMSCRAWVSPEELEEIQAYDPEHWVWARDRARLS.

Residues 16-50 are disordered; sequence GVDPSPPCRSLGWKRKREWSDESEEEPEKELAPEP. A compositionally biased stretch (acidic residues) spans 36 to 50; sequence DESEEEPEKELAPEP.

Belongs to the Speedy/Ringo family. As to expression, predominantly expressed in testis and heart.

The sequence is that of Speedy protein E1 from Homo sapiens (Human).